A 365-amino-acid polypeptide reads, in one-letter code: Probable dual-specificity RNA methyltransferase RlmN (365 aa).

The Proton acceptor role is filled by Glu-99. Residues 105-344 (QSYGLSVCVT…CVVRQEHGTD (240 aa)) form the Radical SAM core domain. An intrachain disulfide couples Cys-112 to Cys-349. [4Fe-4S] cluster contacts are provided by Cys-119, Cys-123, and Cys-126. S-adenosyl-L-methionine-binding positions include 171–172 (GE), Ser-203, 227–229 (SLH), and Asn-305. The S-methylcysteine intermediate role is filled by Cys-349.

The protein belongs to the radical SAM superfamily. RlmN family. The cofactor is [4Fe-4S] cluster.

It is found in the cytoplasm. The enzyme catalyses adenosine(2503) in 23S rRNA + 2 reduced [2Fe-2S]-[ferredoxin] + 2 S-adenosyl-L-methionine = 2-methyladenosine(2503) in 23S rRNA + 5'-deoxyadenosine + L-methionine + 2 oxidized [2Fe-2S]-[ferredoxin] + S-adenosyl-L-homocysteine. It catalyses the reaction adenosine(37) in tRNA + 2 reduced [2Fe-2S]-[ferredoxin] + 2 S-adenosyl-L-methionine = 2-methyladenosine(37) in tRNA + 5'-deoxyadenosine + L-methionine + 2 oxidized [2Fe-2S]-[ferredoxin] + S-adenosyl-L-homocysteine. Its function is as follows. Specifically methylates position 2 of adenine 2503 in 23S rRNA and position 2 of adenine 37 in tRNAs. The chain is Probable dual-specificity RNA methyltransferase RlmN from Lactococcus lactis subsp. cremoris (strain MG1363).